Consider the following 569-residue polypeptide: Membrane protein insertase YidC (569 aa).

A run of 8 helical transmembrane segments spans residues 7–24 (VLWVIFSFSLLMLWDNYN), 219–239 (GSALGGGSMFMASAFTGPAIY), 299–319 (LYAVGTILPMGTVAPGATASM), 340–360 (FELVKDYGWLTIIAKPIFWLM), 366–386 (ILGNWGWTIIVLTIVIKLAFF), 436–456 (IGGCFPMLVQIPVFISLYWVL), 485–505 (IGTFHLTIGILPILMAISMFI), and 526–546 (PIAFSVMFFFFPAGLVLYWVV).

Belongs to the OXA1/ALB3/YidC family. Type 1 subfamily. Interacts with the Sec translocase complex via SecD. Specifically interacts with transmembrane segments of nascent integral membrane proteins during membrane integration.

The protein localises to the cell inner membrane. In terms of biological role, required for the insertion and/or proper folding and/or complex formation of integral membrane proteins into the membrane. Involved in integration of membrane proteins that insert both dependently and independently of the Sec translocase complex, as well as at least some lipoproteins. Aids folding of multispanning membrane proteins. The sequence is that of Membrane protein insertase YidC from Herminiimonas arsenicoxydans.